The primary structure comprises 206 residues: Transmembrane emp24 domain-containing protein bai (206 aa).

Positions 1–20 are cleaved as a signal peptide; that stretch reads MMKAILATLAIFGCIWPGQS. The Lumenal portion of the chain corresponds to 21–172; that stretch reads VMFHLTPNTQ…RDTNEKTNSR (152 aa). Residues 30-140 form the GOLD domain; the sequence is QKCLKEDIQA…LKPLEVDLKR (111 aa). A helical membrane pass occupies residues 173 to 193; sequence VLFFSIFSMCCLLGLATWQVL. The Cytoplasmic segment spans residues 194–206; sequence YLRRYFKAKKLIE.

This sequence belongs to the EMP24/GP25L family.

The protein localises to the membrane. Its function is as follows. Eca and bai are essential, though not redundant, for dorsoventral patterning of the embryo. Specifically required during early embryogenesis for the activity of maternal tkv, while the zygotic tkv is not affected. This Drosophila willistoni (Fruit fly) protein is Transmembrane emp24 domain-containing protein bai.